A 366-amino-acid chain; its full sequence is ACP-SH:acetate ligase (366 aa).

Its subcellular location is the cytoplasm. The enzyme catalyses holo-[ACP] + acetate + ATP = acetyl-[ACP] + AMP + diphosphate. Its function is as follows. Acyl-carrier protein (ACP) acetate ligase of the biotin-dependent malonate decarboxylase multienzyme complex (EC 7.2.4.4). Involved in the conversion of the thiol group of the ACP-bound 2'-(5-phosphoribosyl)-3'-dephospho-CoA prosthetic group into its acetyl thioester using the energy from the hydrolysis of ATP. In Malonomonas rubra, this protein is ACP-SH:acetate ligase (madH).